A 41-amino-acid chain; its full sequence is Replication-associated protein (41 aa).

Involved in viral RNA replication. The polypeptide is Replication-associated protein (Potato leafroll virus (strain Potato/Scotland/strain 1/1984) (PLrV)).